A 716-amino-acid polypeptide reads, in one-letter code: Polyribonucleotide nucleotidyltransferase (716 aa).

Asp480 and Asp486 together coordinate Mg(2+). The KH domain maps to 547–606 (PKIVQLQIDIDKISLVIGSTGKTVKAITDEFEVKVQIEQNGKIILFGDDDFKMQKAKERI). One can recognise an S1 motif domain in the interval 616–711 (GEIYEGTVKK…KFGKIDLEIV (96 aa)).

It belongs to the polyribonucleotide nucleotidyltransferase family. It depends on Mg(2+) as a cofactor.

Its subcellular location is the cytoplasm. It carries out the reaction RNA(n+1) + phosphate = RNA(n) + a ribonucleoside 5'-diphosphate. Its function is as follows. Involved in mRNA degradation. Catalyzes the phosphorolysis of single-stranded polyribonucleotides processively in the 3'- to 5'-direction. The sequence is that of Polyribonucleotide nucleotidyltransferase from Borreliella burgdorferi (strain ATCC 35210 / DSM 4680 / CIP 102532 / B31) (Borrelia burgdorferi).